The sequence spans 187 residues: Putative protein 2 (187 aa).

2 helical membrane passes run 10–27 and 99–121; these read MLAA…NVGV and VTII…LLLV.

The protein belongs to the TMEM9 family.

The protein resides in the membrane. The protein is Putative protein 2 of Takifugu rubripes (Japanese pufferfish).